The chain runs to 256 residues: Small ribosomal subunit protein eS1 (256 aa).

Positions methionine 1–lysine 18 are enriched in basic residues. The tract at residues methionine 1–threonine 20 is disordered. Alanine 2 is modified (N-acetylalanine; partial).

Belongs to the eukaryotic ribosomal protein eS1 family. Component of the small ribosomal subunit. Mature ribosomes consist of a small (40S) and a large (60S) subunit. The 40S subunit contains about 33 different proteins and 1 molecule of RNA (18S). The 60S subunit contains about 49 different proteins and 3 molecules of RNA (25S, 5.8S and 5S).

It is found in the cytoplasm. The chain is Small ribosomal subunit protein eS1 (rps1) from Emericella nidulans (strain FGSC A4 / ATCC 38163 / CBS 112.46 / NRRL 194 / M139) (Aspergillus nidulans).